Here is a 424-residue protein sequence, read N- to C-terminus: UDP-N-acetylglucosamine 1-carboxyvinyltransferase (424 aa).

22–23 (KN) is a phosphoenolpyruvate binding site. Arg-95 provides a ligand contact to UDP-N-acetyl-alpha-D-glucosamine. Cys-119 functions as the Proton donor in the catalytic mechanism. At Cys-119 the chain carries 2-(S-cysteinyl)pyruvic acid O-phosphothioketal. UDP-N-acetyl-alpha-D-glucosamine contacts are provided by residues 124–128 (RPVDQ), Asp-311, and Ile-333.

This sequence belongs to the EPSP synthase family. MurA subfamily.

It localises to the cytoplasm. The enzyme catalyses phosphoenolpyruvate + UDP-N-acetyl-alpha-D-glucosamine = UDP-N-acetyl-3-O-(1-carboxyvinyl)-alpha-D-glucosamine + phosphate. Its pathway is cell wall biogenesis; peptidoglycan biosynthesis. In terms of biological role, cell wall formation. Adds enolpyruvyl to UDP-N-acetylglucosamine. This chain is UDP-N-acetylglucosamine 1-carboxyvinyltransferase, found in Polaromonas naphthalenivorans (strain CJ2).